Consider the following 408-residue polypeptide: Bifunctional polynucleotide phosphatase/kinase (408 aa).

A disordered region spans residues 1-38 (MSSKKRKSPPQESLTSYFEKSSKSSKKYGSQNKDSDSS). Residue S8 is modified to Phosphoserine. 2 stretches are compositionally biased toward polar residues: residues 10–19 (PQESLTSYFE) and 28–38 (YGSQNKDSDSS). 263–270 (GFPSSGKS) contributes to the ATP binding site.

This sequence in the N-terminal section; belongs to the DNA 3' phosphatase family.

Its subcellular location is the nucleus. It carries out the reaction a 3'end (2'-deoxyribonucleotide 3'-phosphate)-DNA + H2O = a 3'-end 2'-deoxyribonucleotide-DNA + phosphate. It catalyses the reaction a 5'-end dephospho-2'-deoxyribonucleoside-DNA + ATP = a 5'-end 5'-phospho-2'-deoxyribonucleoside-DNA + ADP + H(+). Its function is as follows. Catalyzes the phosphorylation of DNA at 5'-hydroxyl termini and can dephosphorylate its 3'-phosphate termini. Has a role in the repair of breaks in single-stranded DNA. In Schizosaccharomyces pombe (strain 972 / ATCC 24843) (Fission yeast), this protein is Bifunctional polynucleotide phosphatase/kinase (pnk1).